Here is a 381-residue protein sequence, read N- to C-terminus: Putative acetyl-CoA C-acetyltransferase VraB (381 aa).

Cys86 acts as the Acyl-thioester intermediate in catalysis. The active-site Proton acceptor is the His338.

Belongs to the thiolase-like superfamily. Thiolase family.

The chain is Putative acetyl-CoA C-acetyltransferase VraB (vraB) from Staphylococcus haemolyticus (strain JCSC1435).